Here is a 135-residue protein sequence, read N- to C-terminus: Large ribosomal subunit protein uL16c (135 aa).

Belongs to the universal ribosomal protein uL16 family. In terms of assembly, part of the 50S ribosomal subunit.

The protein resides in the plastid. It is found in the chloroplast. This Jasminum nudiflorum (Winter jasmine) protein is Large ribosomal subunit protein uL16c.